Consider the following 768-residue polypeptide: MPAWPRFMSLRRQYLYKALDKNHQKHPIKHPHTRFLSRLFCALAVLFSYSIYQSFRTDLKQSGSWGCEMSWMSPSYRRLEWTEFISTRYALYLYREQGLDSEDTLSGHPVLFVPGNAGSYQQVRSIASSASKQYYEQVKARERNVVTGKKIDFFTADLKEEFSAFHARTVREQAVFIQHCIKGILQEYTHLPQEKRPTQVTLLAHSMGGVVARLAMDPITSISVDIIVTLSTPHILPPLALERDMDSIYSLIRWRRQHISTHPPLISICGGISDTQIVSDSCALPFFQAGNNSDIAVFTTGIPGVWTAVEHQAIIWCHQIRWRIARMLLDMSSRANTTAKLVTAKEWLLDYQEDETLKEPRSERQHDYSVSSRNMTFIGLHQPSKAFVAQQCNGLERCRTVPSVMSLLPFPNNPSDPFPLPGEGIKPSEVMLVAEISLSSTNTVVKINASQYGQTIAGSREHHLVKGNSWSEFTITMRYRYIRIQLLFCIRPTHTSTFSFYCGTLLTLPRQSWHLSGDISIALMSCTTGVAQKKLLQRTGQICDSVPYGRSCMASRVGCCGSSVSIIRFYQHRSVRTCKGFKLILVGEILSWNSALERIARRRMPICIVLLLLGATIQSQLPDFPMLHTFFLGVNQLEMVPLVGILGVWTFGLLCVVSFHLISTCAIFTTLLIPFKILHVAIWSRNIWTGSAALVSTDNNFYYAIPPALLVKCASCGGTIQKRHVCLKACRIALIILIMSSFSVGARWTWILSPIANAVLILFVASII.

Residues 35-55 traverse the membrane as a helical segment; that stretch reads FLSRLFCALAVLFSYSIYQSF. Ser206 is an active-site residue. 4 N-linked (GlcNAc...) asparagine glycosylation sites follow: Asn291, Asn336, Asn374, and Asn448. The next 6 membrane-spanning stretches (helical) occupy residues 604–624, 642–662, 663–683, 700–720, 725–745, and 748–768; these read MPICIVLLLLGATIQSQLPDF, LVGILGVWTFGLLCVVSFHLI, STCAIFTTLLIPFKILHVAIW, NFYYAIPPALLVKCASCGGTI, VCLKACRIALIILIMSSFSVG, and WTWILSPIANAVLILFVASII.

It belongs to the GPI inositol-deacylase family.

It localises to the endoplasmic reticulum membrane. Involved in inositol deacylation of GPI-anchored proteins which plays important roles in the quality control and ER-associated degradation of GPI-anchored proteins. The chain is GPI inositol-deacylase (BST1) from Cryptococcus neoformans var. neoformans serotype D (strain B-3501A) (Filobasidiella neoformans).